Consider the following 301-residue polypeptide: Probable alpha-L-glutamate ligase (301 aa).

Residues 104-287 (LQLLSRKGIG…IAGIIIQYLE (184 aa)) form the ATP-grasp domain. ATP-binding positions include Lys-141, 178 to 179 (EY), Asp-187, and 211 to 213 (RSN). Mg(2+)-binding residues include Asp-248, Glu-260, and Asn-262. Mn(2+)-binding residues include Asp-248, Glu-260, and Asn-262.

This sequence belongs to the RimK family. The cofactor is Mg(2+). Requires Mn(2+) as cofactor.

The protein is Probable alpha-L-glutamate ligase of Pseudomonas aeruginosa (strain UCBPP-PA14).